A 99-amino-acid chain; its full sequence is Malonate decarboxylase acyl carrier protein (99 aa).

Serine 25 is modified (O-(phosphoribosyl dephospho-coenzyme A)serine).

Covalently binds the prosthetic group of malonate decarboxylase.

It localises to the cytoplasm. In terms of biological role, subunit of malonate decarboxylase, it is an acyl carrier protein to which acetyl and malonyl thioester residues are bound via a 2'-(5''-phosphoribosyl)-3'-dephospho-CoA prosthetic group and turn over during the catalytic mechanism. The sequence is that of Malonate decarboxylase acyl carrier protein (mdcC) from Klebsiella pneumoniae.